Consider the following 172-residue polypeptide: MERAAKKEAVESLNGLFQTTSVAVVAHYSGLTVAQMQKLRSQMKQAGASVKVSKNRLAKIALEGTDVVAIGSLLKGPTVIATSSDPVAAPKVAVEFAKANEKFVILGGSMGKTVLNVDGVKALASLPSLDELRGKLVGLLVAPATKIAQLTTAPAAKVARVVQAYASKSEAA.

This sequence belongs to the universal ribosomal protein uL10 family. In terms of assembly, part of the ribosomal stalk of the 50S ribosomal subunit. The N-terminus interacts with L11 and the large rRNA to form the base of the stalk. The C-terminus forms an elongated spine to which L12 dimers bind in a sequential fashion forming a multimeric L10(L12)X complex.

Functionally, forms part of the ribosomal stalk, playing a central role in the interaction of the ribosome with GTP-bound translation factors. In Rhodopseudomonas palustris (strain BisB5), this protein is Large ribosomal subunit protein uL10.